The chain runs to 238 residues: Ribosomal RNA small subunit methyltransferase G (238 aa).

Residues Gly-77, Phe-82, 128-129 (AE), and Arg-147 each bind S-adenosyl-L-methionine.

It belongs to the methyltransferase superfamily. RNA methyltransferase RsmG family.

The protein resides in the cytoplasm. Functionally, specifically methylates the N7 position of guanine in position 535 of 16S rRNA. In Listeria welshimeri serovar 6b (strain ATCC 35897 / DSM 20650 / CCUG 15529 / CIP 8149 / NCTC 11857 / SLCC 5334 / V8), this protein is Ribosomal RNA small subunit methyltransferase G.